The chain runs to 318 residues: MLEVEKKIKQKLGIDETEVLSSLTSYRKKGKTYYKIVTYDSKTKQSRRYHVPRMFEEEILALWKQRQKYIEEERELEREVKSLLKKYGDAEKIKEILEKVAGESFDKAVSSYAIKTYTNKAKELFKSFKEDLIKLYREGVLKRLSVLQVLYLLANLKEISEDTERGSYFFKKGLNTIIKVAKNERIPNPFGTLKNDFFLSGKQTPYDFLLSNFLEELIGETLGELLEKEIEKLVAEEKAKEIEGKVKKLKEIVSWFETLPYEIKQIAKEVISDNVLDIAEKFYKDMKECNYSLDEAKAFLTSSPRDNLVNYMQYLKSI.

It to A.aeolicus AA07 and AA11.

This is an uncharacterized protein from Aquifex aeolicus (strain VF5).